Here is a 135-residue protein sequence, read N- to C-terminus: Large ribosomal subunit protein uL16 (135 aa).

It belongs to the universal ribosomal protein uL16 family. Part of the 50S ribosomal subunit.

Binds 23S rRNA and is also seen to make contacts with the A and possibly P site tRNAs. The chain is Large ribosomal subunit protein uL16 from Desulforapulum autotrophicum (strain ATCC 43914 / DSM 3382 / VKM B-1955 / HRM2) (Desulfobacterium autotrophicum).